A 381-amino-acid polypeptide reads, in one-letter code: uncharacterized protein (381 aa).

Disordered stretches follow at residues Met-1 to Thr-20 and Ile-36 to Glu-381. Acidic residues predominate over residues Asn-9–Asp-18. 2 stretches are compositionally biased toward basic and acidic residues: residues Thr-166–Glu-175 and Ser-186–Arg-237. Residues Ser-339, Ser-346, and Ser-357 each carry the phosphoserine modification. Over residues Lys-364–Lys-374 the composition is skewed to basic residues.

This is an uncharacterized protein from Arabidopsis thaliana (Mouse-ear cress).